Consider the following 163-residue polypeptide: Probable ribosome biogenesis protein RLP24 (163 aa).

It belongs to the eukaryotic ribosomal protein eL24 family. In terms of assembly, associated with nucleolar and cytoplasmic pre-60S particles. At the end of biogenesis it dissociates from cytoplasmic pre-60S particles and is likely to be exchanged for its ribosomal homolog, RPL24.

It localises to the nucleus. The protein resides in the nucleolus. Its function is as follows. Involved in the biogenesis of the 60S ribosomal subunit. Ensures the docking of GTPBP4/NOG1 to pre-60S particles. The chain is Probable ribosome biogenesis protein RLP24 (Rsl24d1) from Rattus norvegicus (Rat).